The chain runs to 101 residues: Urease subunit beta (101 aa).

This sequence belongs to the urease beta subunit family. As to quaternary structure, heterotrimer of UreA (gamma), UreB (beta) and UreC (alpha) subunits. Three heterotrimers associate to form the active enzyme.

It is found in the cytoplasm. The enzyme catalyses urea + 2 H2O + H(+) = hydrogencarbonate + 2 NH4(+). It participates in nitrogen metabolism; urea degradation; CO(2) and NH(3) from urea (urease route): step 1/1. This Actinobacillus pleuropneumoniae serotype 5b (strain L20) protein is Urease subunit beta.